The following is a 1394-amino-acid chain: DNA-directed RNA polymerase subunit beta' (1394 aa).

Zn(2+) contacts are provided by Cys71, Cys73, Cys86, and Cys89. Mg(2+) contacts are provided by Asp462, Asp464, and Asp466. Zn(2+) is bound by residues Cys811, Cys885, Cys892, and Cys895.

This sequence belongs to the RNA polymerase beta' chain family. The RNAP catalytic core consists of 2 alpha, 1 beta, 1 beta' and 1 omega subunit. When a sigma factor is associated with the core the holoenzyme is formed, which can initiate transcription. Requires Mg(2+) as cofactor. Zn(2+) serves as cofactor.

The catalysed reaction is RNA(n) + a ribonucleoside 5'-triphosphate = RNA(n+1) + diphosphate. In terms of biological role, DNA-dependent RNA polymerase catalyzes the transcription of DNA into RNA using the four ribonucleoside triphosphates as substrates. The protein is DNA-directed RNA polymerase subunit beta' of Xanthobacter autotrophicus (strain ATCC BAA-1158 / Py2).